A 209-amino-acid polypeptide reads, in one-letter code: N-(5'-phosphoribosyl)anthranilate isomerase (209 aa).

This sequence belongs to the TrpF family.

It carries out the reaction N-(5-phospho-beta-D-ribosyl)anthranilate = 1-(2-carboxyphenylamino)-1-deoxy-D-ribulose 5-phosphate. It participates in amino-acid biosynthesis; L-tryptophan biosynthesis; L-tryptophan from chorismate: step 3/5. The polypeptide is N-(5'-phosphoribosyl)anthranilate isomerase (Pelobacter propionicus (strain DSM 2379 / NBRC 103807 / OttBd1)).